The primary structure comprises 418 residues: AP-3 complex subunit mu-1 (418 aa).

The MHD domain maps to 176-417 (NNEAYFDVVE…VTKAGKFQVR (242 aa)).

Belongs to the adaptor complexes medium subunit family. In terms of assembly, adaptor protein complex 3 (AP-3) is a heterotetramer composed of two large adaptins (delta-type subunit AP3D1 and beta-type subunit AP3B1 or AP3B2), a medium adaptin (mu-type subunit AP3M1 or AP3M2) and a small adaptin (sigma-type subunit APS1 or AP3S2). Interacts with AGAP1. AP-3 associates with the BLOC-1 complex.

The protein localises to the golgi apparatus. The protein resides in the cytoplasmic vesicle membrane. Its function is as follows. Part of the AP-3 complex, an adaptor-related complex which is not clathrin-associated. The complex is associated with the Golgi region as well as more peripheral structures. It facilitates the budding of vesicles from the Golgi membrane and may be directly involved in trafficking to lysosomes. In concert with the BLOC-1 complex, AP-3 is required to target cargos into vesicles assembled at cell bodies for delivery into neurites and nerve terminals. In Bos taurus (Bovine), this protein is AP-3 complex subunit mu-1 (AP3M1).